Here is a 175-residue protein sequence, read N- to C-terminus: Apoptosis regulator Bcl-2 homolog (175 aa).

Residues 75-94 (QVLEDKINWGRIITIIAFCA) carry the BH1 motif. The BH2 motif lies at 105–120 (SPQYYDGIISEAITDA).

It belongs to the Bcl-2 family. As to quaternary structure, interacts with host BAX; this interaction inhibits BAX oligomerization and subsequent activation. Interacts with host BAK1.

The protein resides in the host mitochondrion. Its function is as follows. Plays a role in the inhibition of host apoptosis by sequestering and inactivating multiple proapoptotic BCL-2 proteins, including BAK1 and BAX. The protein is Apoptosis regulator Bcl-2 homolog of Vertebrata (FPV).